We begin with the raw amino-acid sequence, 345 residues long: Sesquiterpene synthase GALMADRAFT_104215 (345 aa).

Mg(2+) contacts are provided by Asp91, Asn226, Ser230, and Glu234. The DDXXD motif motif lies at 91-95 (DEFTD). (2E,6E)-farnesyl diphosphate-binding residues include Arg316 and Tyr317.

This sequence belongs to the terpene synthase family. It depends on Mg(2+) as a cofactor.

The catalysed reaction is (2E,6E)-farnesyl diphosphate = beta-gurjunene + diphosphate. In terms of biological role, terpene cyclase that catalyzes the cyclization of farnesyl diphosphate (FPP) to beta-gurjunene. This is Sesquiterpene synthase GALMADRAFT_104215 from Galerina marginata (strain CBS 339.88).